Here is a 574-residue protein sequence, read N- to C-terminus: Putative ABC transporter ATP-binding protein VV2_1533 (574 aa).

ABC transporter domains follow at residues 3–244 (IEFS…GIRE) and 299–533 (LDVR…ANLT). Residues 37–44 (GPSGSGKS) and 332–339 (GKNGSGKS) contribute to the ATP site.

It belongs to the ABC transporter superfamily.

Its subcellular location is the cell inner membrane. Functionally, probably part of an ABC transporter complex. Responsible for energy coupling to the transport system. The polypeptide is Putative ABC transporter ATP-binding protein VV2_1533 (Vibrio vulnificus (strain CMCP6)).